The following is a 486-amino-acid chain: Cysteine--tRNA ligase (486 aa).

Position 29 (C29) interacts with Zn(2+). The 'HIGH' region motif lies at 31 to 41; it reads VTVYDYCHLGH. Positions 217, 242, and 246 each coordinate Zn(2+). Residues 274–278 carry the 'KMSKS' region motif; the sequence is KMSKS. An ATP-binding site is contributed by K277.

The protein belongs to the class-I aminoacyl-tRNA synthetase family. Monomer. The cofactor is Zn(2+).

It localises to the cytoplasm. The catalysed reaction is tRNA(Cys) + L-cysteine + ATP = L-cysteinyl-tRNA(Cys) + AMP + diphosphate. This Thermosynechococcus vestitus (strain NIES-2133 / IAM M-273 / BP-1) protein is Cysteine--tRNA ligase.